Consider the following 736-residue polypeptide: Elongation factor 2 (736 aa).

The 244-residue stretch at 18–261 folds into the tr-type G domain; the sequence is EQIRNIGITA…MVVKHIPNPR (244 aa). GTP is bound by residues 27–34, 93–97, and 147–150; these read AHVDHGKT, DTPGH, and NKID. At H602 the chain carries Diphthamide.

The protein belongs to the TRAFAC class translation factor GTPase superfamily. Classic translation factor GTPase family. EF-G/EF-2 subfamily.

It is found in the cytoplasm. Catalyzes the GTP-dependent ribosomal translocation step during translation elongation. During this step, the ribosome changes from the pre-translocational (PRE) to the post-translocational (POST) state as the newly formed A-site-bound peptidyl-tRNA and P-site-bound deacylated tRNA move to the P and E sites, respectively. Catalyzes the coordinated movement of the two tRNA molecules, the mRNA and conformational changes in the ribosome. The chain is Elongation factor 2 from Desulfurococcus amylolyticus (strain DSM 18924 / JCM 16383 / VKM B-2413 / 1221n) (Desulfurococcus kamchatkensis).